A 466-amino-acid polypeptide reads, in one-letter code: Paraneoplastic antigen Ma3 homolog (466 aa).

A disordered region spans residues 379–408 (RPYQGSRRRRHRRRGQHRKGGVPRDDSQGT). A compositionally biased stretch (basic residues) spans 384 to 399 (SRRRRHRRRGQHRKGG). Residues 415–432 (TFCYSCGEDGHIRVHCFN) form a CCHC-type zinc finger. Residues 441–466 (QKRQAAMEKGNRSWAWEKSHPKPKTK) are disordered. The span at 445–460 (AAMEKGNRSWAWEKSH) shows a compositional bias: basic and acidic residues.

Belongs to the PNMA family. In terms of tissue distribution, expressed in the cerebrum and cerebellum.

The protein localises to the nucleus. It localises to the nucleolus. The sequence is that of Paraneoplastic antigen Ma3 homolog (Pnma3) from Mus musculus (Mouse).